The chain runs to 574 residues: Developmental and secondary metabolism regulator veA (574 aa).

4 disordered regions span residues 1–22, 39–60, 255–500, and 513–548; these read MATRAPLAPPPNETEASVSRIT, ERARACGAGAKSSADRRPVDPP, RSSD…GAGK, and RSYEDSFGHDDRPLYNGMRPDTESHPRRLSDAGRNF. The Velvet domain occupies 25–230; it reads GKKLTYKLNV…AEQGCRVRIR (206 aa). Positions 39–44 match the Nuclear localization signal motif; it reads ERARAC. Pro residues-rich tracts occupy residues 314-323 and 330-341; these read RPMPPAPVPA and PAPPAPPAPPSH. 4 stretches are compositionally biased toward polar residues: residues 343–359, 385–394, 402–415, and 448–458; these read PGYQSHLSFGSTQTQYP, HARNPSTSAE, YPSSRVSTERSSYP, and VAQSAGPRSQT. Residues 457 to 501 form a PEST region; sequence QTPSSSLVPSLPPLKALSGDYPNNLSQPSSSISQSPSHDLGAGKK. Composition is skewed to low complexity over residues 459–474 and 482–493; these read PSSSLVPSLPPLKALS and SQPSSSISQSPS. 2 stretches are compositionally biased toward basic and acidic residues: residues 513–525 and 532–543; these read RSYEDSFGHDDRP and PDTESHPRRLSD.

The protein belongs to the velvet family. VeA subfamily. In terms of assembly, component of the heterotrimeric velvet complex composed of laeA, veA and velB; VeA acting as a bridging protein between laeA and velB.

It localises to the nucleus. It is found in the cytoplasm. Its function is as follows. Component of the velvet transcription factor complex that controls sexual/asexual developmental ratio in response to light, promoting sexual development in the darkness while stimulating asexual sporulation under illumination. The velvet complex hat acts as a global regulator for secondary metabolite gene expression. Controls the expression of the aflatoxin gene cluster. Required for the expression of aflR and aflJ. Mediates the coordination of aflatoxigenic vesicles (aflatoxisomes) development with aflatoxin gene expression. Regulates branched chain amino acid and ethanol metabolism and acts as a positive regulator of mitochondrial and peroxisomal beta-oxidation. This is Developmental and secondary metabolism regulator veA from Aspergillus parasiticus.